The following is a 313-amino-acid chain: Intelectin-1a (313 aa).

An N-terminal signal peptide occupies residues 1–18 (MTQLGFLLFIMVATRGCS). Residues 32 to 251 (SFFSSLPRSC…NNERAASALC (220 aa)) form the Fibrinogen C-terminal domain. A disulfide bridge connects residues Cys41 and Cys70. Positions 86, 87, 89, 92, 97, 98, and 133 each coordinate Ca(2+). 3 disulfide bridges follow: Cys94/Cys280, Cys199/Cys259, and Cys251/Cys265. Residues Asn260, Glu262, Glu274, and Asp282 each coordinate Ca(2+). Residues 262–263 (EH) and Glu274 contribute to the a carbohydrate site. A lipid anchor (GPI-anchor amidated serine) is attached at Ser298. Residues 299-313 (SSRKITEAAVLLFYR) constitute a propeptide that is removed on maturation.

As to quaternary structure, monomer. May interact with LTF. Expressed in small intestinal Paneth cells in uninfected mice. Expression also detected in various other tissues including stomach, kidney, ovary and brain.

It is found in the cell membrane. The protein resides in the secreted. Functionally, lectin that specifically recognizes microbial carbohydrate chains in a calcium-dependent manner. Binds to microbial glycans that contain a terminal acyclic 1,2-diol moiety, including beta-linked D-galactofuranose (beta-Galf), D-phosphoglycerol-modified glycans, D-glycero-D-talo-oct-2-ulosonic acid (KO) and 3-deoxy-D-manno-oct-2-ulosonic acid (KDO). Binds to glycans from Gram-positive and Gram-negative bacteria, including K.pneumoniae, S.pneumoniae, Y.pestis, P.mirabilis and P.vulgaris. Does not bind mammalian glycans. Probably plays a role in the defense system against microorganisms. May function as adipokine that has no effect on basal glucose uptake but enhances insulin-stimulated glucose uptake in adipocytes. Increases AKT phosphorylation in the absence and presence of insulin. May interact with lactoferrin/LTF and increase its uptake, and may thereby play a role in iron absorption. The protein is Intelectin-1a (Itln1) of Mus musculus (Mouse).